The sequence spans 400 residues: Nicotinate phosphoribosyltransferase (400 aa).

His220 carries the phosphohistidine; by autocatalysis modification.

The protein belongs to the NAPRTase family. Post-translationally, transiently phosphorylated on a His residue during the reaction cycle. Phosphorylation strongly increases the affinity for substrates and increases the rate of nicotinate D-ribonucleotide production. Dephosphorylation regenerates the low-affinity form of the enzyme, leading to product release.

The enzyme catalyses nicotinate + 5-phospho-alpha-D-ribose 1-diphosphate + ATP + H2O = nicotinate beta-D-ribonucleotide + ADP + phosphate + diphosphate. The protein operates within cofactor biosynthesis; NAD(+) biosynthesis; nicotinate D-ribonucleotide from nicotinate: step 1/1. Its function is as follows. Catalyzes the synthesis of beta-nicotinate D-ribonucleotide from nicotinate and 5-phospho-D-ribose 1-phosphate at the expense of ATP. The protein is Nicotinate phosphoribosyltransferase of Escherichia coli O45:K1 (strain S88 / ExPEC).